The chain runs to 143 residues: Transcriptional regulator MraZ (143 aa).

2 SpoVT-AbrB domains span residues 5 to 47 (EYQH…SLEE) and 76 to 119 (AAEV…DKSK).

The protein belongs to the MraZ family. Forms oligomers.

It localises to the cytoplasm. The protein localises to the nucleoid. The sequence is that of Transcriptional regulator MraZ from Acetivibrio thermocellus (strain ATCC 27405 / DSM 1237 / JCM 9322 / NBRC 103400 / NCIMB 10682 / NRRL B-4536 / VPI 7372) (Clostridium thermocellum).